The following is a 131-amino-acid chain: Heat shock protein 15 homolog (131 aa).

Positions 6 to 67 constitute an S4 RNA-binding domain; it reads VRLDKWLWAA…NEEKEIKIIA (62 aa). Residues 98–131 form a disordered region; sequence ARKNNSLSMPHPDRRPNKKERRDLLKFKHQDKFE. The span at 108–131 shows a compositional bias: basic and acidic residues; it reads HPDRRPNKKERRDLLKFKHQDKFE.

It belongs to the HSP15 family.

In terms of biological role, involved in the recycling of free 50S ribosomal subunits that still carry a nascent chain. Binds RNA more specifically than DNA. Binds with very high affinity to the free 50S ribosomal subunit. Does not bind it when it is part of the 70S ribosome. The polypeptide is Heat shock protein 15 homolog (hslR) (Haemophilus influenzae (strain ATCC 51907 / DSM 11121 / KW20 / Rd)).